Here is a 239-residue protein sequence, read N- to C-terminus: Fatty acid metabolism regulator protein (239 aa).

Positions 6-74 (KGPASFAEKY…HGKPTRVNNF (69 aa)) constitute an HTH gntR-type domain. Residues 34–53 (ERELSELIGVTRTTLREVLQ) constitute a DNA-binding region (H-T-H motif).

As to quaternary structure, homodimer.

Its subcellular location is the cytoplasm. Multifunctional regulator of fatty acid metabolism. This Shewanella halifaxensis (strain HAW-EB4) protein is Fatty acid metabolism regulator protein.